The chain runs to 177 residues: Thymidine kinase (177 aa).

11 to 18 (GPMFSGKS) serves as a coordination point for ATP. Catalysis depends on Glu83, which acts as the Proton acceptor. Phe113 contacts substrate. Zn(2+) is bound by residues Cys138 and Cys141. Residue 157-161 (IEIIG) participates in substrate binding. The Zn(2+) site is built by Cys170 and Cys173.

It belongs to the thymidine kinase family. Homotetramer. Two molecules of substrate bind to each enzyme tetramer.

It catalyses the reaction thymidine + ATP = dTMP + ADP + H(+). Functionally, phosphorylates thymidine and thymidine analogs, such as azidothymidine (AZT). Part of the salvage pathway for pyrimidine deoxyribonucleotide synthesis. The sequence is that of Thymidine kinase (OPG101) from Homo sapiens (Human).